We begin with the raw amino-acid sequence, 108 residues long: UPF0060 membrane protein BLi00854/BL03049 (108 aa).

Transmembrane regions (helical) follow at residues 3–23 (IAIG…YLVW), 31–51 (PLWY…IPAF), 60–80 (VYAA…WLVD), and 86–106 (LYDW…LWAP).

It belongs to the UPF0060 family.

It localises to the cell membrane. The chain is UPF0060 membrane protein BLi00854/BL03049 from Bacillus licheniformis (strain ATCC 14580 / DSM 13 / JCM 2505 / CCUG 7422 / NBRC 12200 / NCIMB 9375 / NCTC 10341 / NRRL NRS-1264 / Gibson 46).